We begin with the raw amino-acid sequence, 145 residues long: Large ribosomal subunit protein bL19 (145 aa).

Positions 112-130 (GKSARIKERRPAKAVEKTS) are enriched in basic and acidic residues. The tract at residues 112-145 (GKSARIKERRPAKAVEKTSKPASAKKPAAKANKK) is disordered.

Belongs to the bacterial ribosomal protein bL19 family.

This protein is located at the 30S-50S ribosomal subunit interface and may play a role in the structure and function of the aminoacyl-tRNA binding site. This is Large ribosomal subunit protein bL19 from Malacoplasma penetrans (strain HF-2) (Mycoplasma penetrans).